Here is a 274-residue protein sequence, read N- to C-terminus: MQFSKMHGLGNDFMVIDGVTQNVYLTEELIRKWADRHRGVGFDQLLLVEPPYDPELDFHYRIFNADGSEVSQCGNGARCFARFVTLKGLTNKQDIGVSTAKGKMVLSLQDDGQVRVNMGEPIWEPAQIPFTANKFEKNYILRTDIQTVLCGVVSMGNPHCVLQVENIQTANVNELGALLERHERFPERANIGFMQVINRNHIKLRVFERGAGETQACGSGACGAVAVGIMQGLLDSRVQVDLPGGTLHIEWQGVGSPLYMTGDAEHIYDGAVKS.

Residues N11, Q44, and N64 each contribute to the substrate site. C73 serves as the catalytic Proton donor. Residues 74 to 75, N157, N190, and 208 to 209 contribute to the substrate site; these read GN and ER. The active-site Proton acceptor is C217. 218–219 serves as a coordination point for substrate; sequence GS.

It belongs to the diaminopimelate epimerase family. In terms of assembly, homodimer.

The protein resides in the cytoplasm. It catalyses the reaction (2S,6S)-2,6-diaminopimelate = meso-2,6-diaminopimelate. It participates in amino-acid biosynthesis; L-lysine biosynthesis via DAP pathway; DL-2,6-diaminopimelate from LL-2,6-diaminopimelate: step 1/1. Its function is as follows. Catalyzes the stereoinversion of LL-2,6-diaminopimelate (L,L-DAP) to meso-diaminopimelate (meso-DAP), a precursor of L-lysine and an essential component of the bacterial peptidoglycan. The polypeptide is Diaminopimelate epimerase (Glaesserella parasuis serovar 5 (strain SH0165) (Haemophilus parasuis)).